Consider the following 478-residue polypeptide: D(1B) dopamine receptor (478 aa).

At 1–38 the chain is on the extracellular side; sequence MLPPGRNGTAHRARLGLQRQLAQVDAPGGSAAPLGPAQ. A glycan (N-linked (GlcNAc...) asparagine) is linked at asparagine 7. Residues 39-64 traverse the membrane as a helical segment; the sequence is VVTAGLLTLLIVWTLLGNVLVCAAIV. Over 65–75 the chain is Cytoplasmic; it reads RSRHLRAKMTN. Residues 76–102 traverse the membrane as a helical segment; sequence IFIVSLAVSDLFVALLVMPWKAVAEVA. Residues 103–111 are Extracellular-facing; that stretch reads GYWPFGAFC. Residues cysteine 111 and cysteine 211 are joined by a disulfide bond. Residues 112-134 form a helical membrane-spanning segment; sequence DIWVAFDIMCSTASILNLCIISV. Residues 135–153 lie on the Cytoplasmic side of the membrane; the sequence is DRYWAISRPFRYERKMTQR. The helical transmembrane segment at 154–179 threads the bilayer; the sequence is VALVMVALAWTLSILISFIPVQLNWH. The Extracellular segment spans residues 180–215; the sequence is RDKAGSQGREGLLSNETPWEEGWELDGRTENCDSSL. Residues 216 to 240 form a helical membrane-spanning segment; it reads NRTYAISSSLISFYIPVAIMIVTYT. Topologically, residues 241 to 289 are cytoplasmic; that stretch reads RIYRIAQVQIRRISSLERAAEHAQSCRSRGACEPDPSLRASIKKETKVF. A helical transmembrane segment spans residues 290–317; the sequence is KTLSVIMGVFVCCWLPFFILNCMVPFCS. At 318–335 the chain is on the extracellular side; sequence SGDAQGPRTGFPCVSETT. A helical membrane pass occupies residues 336-357; it reads FDIFVWFGWANSSLNPIIYAFN. Residues 358-478 lie on the Cytoplasmic side of the membrane; it reads ADFRKVFAQL…LTPNCFHKTA (121 aa). Cysteine 370 carries the S-palmitoyl cysteine lipid modification. Positions 416–446 are disordered; the sequence is GDREVGEEEEAEEEGPFDHMSQISPTTPDGD. A compositionally biased stretch (acidic residues) spans 420–430; that stretch reads VGEEEEAEEEG.

The protein belongs to the G-protein coupled receptor 1 family.

It localises to the cell membrane. Functionally, dopamine receptor whose activity is mediated by G proteins which activate adenylyl cyclase. The protein is D(1B) dopamine receptor (Drd5) of Mus musculus (Mouse).